The following is a 399-amino-acid chain: L-asparaginase-like protein GE13669 (399 aa).

The N-terminal stretch at 1 to 22 (MLAQSCCLRLLILLLLFKSTCS) is a signal peptide. 3 disulfide bridges follow: cysteine 90–cysteine 95, cysteine 189–cysteine 205, and cysteine 344–cysteine 371.

The protein belongs to the Ntn-hydrolase family.

The chain is L-asparaginase-like protein GE13669 from Drosophila yakuba (Fruit fly).